We begin with the raw amino-acid sequence, 295 residues long: Elongation factor Ts (295 aa).

The involved in Mg(2+) ion dislocation from EF-Tu stretch occupies residues 79–82; sequence TDFV.

It belongs to the EF-Ts family.

The protein resides in the cytoplasm. Functionally, associates with the EF-Tu.GDP complex and induces the exchange of GDP to GTP. It remains bound to the aminoacyl-tRNA.EF-Tu.GTP complex up to the GTP hydrolysis stage on the ribosome. This chain is Elongation factor Ts, found in Mycoplasma mycoides subsp. mycoides SC (strain CCUG 32753 / NCTC 10114 / PG1).